We begin with the raw amino-acid sequence, 870 residues long: Radial spoke head 10 homolog B2 (870 aa).

Residues 1-16 (MVKEKKKADKKGEKSA) are compositionally biased toward basic and acidic residues. The interval 1-44 (MVKEKKKADKKGEKSARSPSSLSDNLDFSKQDGNTTRQEMSPAG) is disordered. Residues 17 to 39 (RSPSSLSDNLDFSKQDGNTTRQE) show a composition bias toward polar residues. MORN repeat units lie at residues 86–108 (YEGEKVRGLYEGEGFAAFQGGCT), 109–131 (YRGMFSEGLMHGQGTYIWADGLK), 132–154 (YEGDFVKNVPMNHGVYTWPDGSM), 155–177 (YEGEVVNGMRNGFGMFKCSTQPV), 179–201 (YIGHWCNGKRHGKGSIYYNQEGT), 204–226 (YEGDWVQNIKKGWGIRCYKSGNI), 227–249 (YEGQWEDNMRHGEGRMRWLTTNE), 251–273 (YTGRWERGIQNGFGTHTWFLKRI), 284–306 (YIGEFVNGYRHGRGKFYYASGAM), and 307–329 (YDGEWVSNKKHGMGRLTFKNGRV). The disordered stretch occupies residues 674–704 (NKSPSAVMSHESDAAHSDSARSSSSKLELSP). Over residues 683–692 (HESDAAHSDS) the composition is skewed to basic and acidic residues. The span at 693–703 (ARSSSSKLELS) shows a compositional bias: low complexity. A coiled-coil region spans residues 784–811 (KEKIRADRLRSTAQAQQRKMEDDELEAR). The segment at 840-870 (VSSSHLILDPPKEDVTVSPSSKTITSKKKKK) is disordered.

In terms of assembly, interacts with RSPH6A. Does not appear to be part of the axonemal radial spoke complexes 1 or 2.

It is found in the cytoplasm. It localises to the cytoskeleton. Its subcellular location is the cilium axoneme. The protein resides in the cell projection. The protein localises to the cilium. It is found in the flagellum. May function as part of the axonemal radial spoke complex 3 (RS3). Radial spoke complexes are important for ciliary motility. This chain is Radial spoke head 10 homolog B2 (RSPH10B2), found in Homo sapiens (Human).